Reading from the N-terminus, the 442-residue chain is Protein translocase subunit SecY (442 aa).

10 consecutive transmembrane segments (helical) span residues 24–44 (FLFL…PGIN), 76–96 (IFAL…LMTA), 125–145 (VLAL…GVAF), 149–169 (FGFY…MMWL), 178–198 (VGNG…PRAI), 212–232 (IFAL…VVFI), 269–289 (VIPA…GSWF), 312–332 (NILL…ALMF), 363–383 (GVLT…CLLP), and 385–405 (FLVV…LIVV).

This sequence belongs to the SecY/SEC61-alpha family. In terms of assembly, component of the Sec protein translocase complex. Heterotrimer consisting of SecY, SecE and SecG subunits. The heterotrimers can form oligomers, although 1 heterotrimer is thought to be able to translocate proteins. Interacts with the ribosome. Interacts with SecDF, and other proteins may be involved. Interacts with SecA.

It localises to the cell inner membrane. In terms of biological role, the central subunit of the protein translocation channel SecYEG. Consists of two halves formed by TMs 1-5 and 6-10. These two domains form a lateral gate at the front which open onto the bilayer between TMs 2 and 7, and are clamped together by SecE at the back. The channel is closed by both a pore ring composed of hydrophobic SecY resides and a short helix (helix 2A) on the extracellular side of the membrane which forms a plug. The plug probably moves laterally to allow the channel to open. The ring and the pore may move independently. In Pseudomonas aeruginosa (strain ATCC 15692 / DSM 22644 / CIP 104116 / JCM 14847 / LMG 12228 / 1C / PRS 101 / PAO1), this protein is Protein translocase subunit SecY.